We begin with the raw amino-acid sequence, 513 residues long: Na(+)/H(+) antiporter NhaB (513 aa).

Helical transmembrane passes span 21 to 41, 88 to 108, 119 to 139, 143 to 163, 208 to 228, 247 to 267, 303 to 323, 357 to 377, 389 to 409, 447 to 467, and 477 to 497; these read ITIVLFLIINPIIFFFISPFI, IIANFEVILLLIFMVAGIYFM, LLLSIRSKMVLSLAFCLSAAF, FLDALTVVAVIISVGMGFYGV, VGTALGGVMTMVGEPQNLIIA, LPVLICGLVTCFLVEKFGVFG, ALIGIWLVVGLAFHLAAVGII, LVVFFSVVAVIIDQHLFAPII, LALFYIFNGLLSAISDNVFVA, ATPNGQAAFLFLLTSSLAPLI, and MALPYTIVLSCIGLLAVEYIL.

This sequence belongs to the NhaB Na(+)/H(+) (TC 2.A.34) antiporter family.

The protein resides in the cell inner membrane. It catalyses the reaction 2 Na(+)(in) + 3 H(+)(out) = 2 Na(+)(out) + 3 H(+)(in). Functionally, na(+)/H(+) antiporter that extrudes sodium in exchange for external protons. The polypeptide is Na(+)/H(+) antiporter NhaB (Pasteurella multocida (strain Pm70)).